A 140-amino-acid polypeptide reads, in one-letter code: Putative pre-16S rRNA nuclease (140 aa).

The protein belongs to the YqgF nuclease family.

The protein resides in the cytoplasm. Could be a nuclease involved in processing of the 5'-end of pre-16S rRNA. The sequence is that of Putative pre-16S rRNA nuclease from Endomicrobium trichonymphae.